The primary structure comprises 500 residues: MNYFPWLTIIVVFPIFAGSLIFFLPHKGNRVIRWYTICICILELLLTTYAFCYHFQLDDPLIQLVEDYKWIDFFDFHWRLGIDGLSIGPILLTGFITTLATLAAWPITRDSRLFHFIMLAMYSGQIGSFSSRDLLLFFIMWELELIPVYLLLAMWGGKKRLYSATKFILYTAGGSVFLLMGVLGVALYGSNEPTLNFETLVNQSYPVVLEIIFYIGFFIAFAVKLPIIPLHTWLPDTHGEAHYSTCMLLAGILLKMGAYGLIRINMELLPHAHSIFSPWLMIIGTIQIIYAASTSLGQRNLKKRIAYSSVSHMGFIIIGISSLTDTGLNGALLQIISHGFIGAALFFLAGTTYDRIRLVYLDEMGGIAIPMPKMFTMFSSFSMASLALPGMSGFVAELIVFFGIITGQKYVLIPKILITFVMAIGMILTPIYSLSMSRQMFYGYKLFNAPKDSFFDSGPRELFLSISIFLPVIGIGIYPDFVLSLAVDKVEVILSNFFYR.

The next 14 helical transmembrane spans lie at 4–24, 37–57, 87–107, 113–130, 134–154, 167–187, 208–228, 242–262, 272–292, 305–325, 330–350, 386–406, 411–431, and 462–482; these read FPWL…IFFL, ICIC…HFQL, IGPI…AWPI, LFHF…GSFS, LLLF…LLAM, FILY…GVAL, VLEI…LPII, HYST…YGLI, AHSI…IYAA, IAYS…SLTD, GALL…FLAG, LALP…GIIT, VLIP…LTPI, and LFLS…PDFV.

This sequence belongs to the complex I subunit 4 family.

The protein resides in the plastid. The protein localises to the chloroplast thylakoid membrane. It carries out the reaction a plastoquinone + NADH + (n+1) H(+)(in) = a plastoquinol + NAD(+) + n H(+)(out). It catalyses the reaction a plastoquinone + NADPH + (n+1) H(+)(in) = a plastoquinol + NADP(+) + n H(+)(out). This chain is NAD(P)H-quinone oxidoreductase chain 4, chloroplastic, found in Atropa belladonna (Belladonna).